We begin with the raw amino-acid sequence, 316 residues long: Phosphatidylglycerol--prolipoprotein diacylglyceryl transferase (316 aa).

Helical transmembrane passes span Pro-18–Leu-38, Gly-47–Gly-67, and Asn-95–Phe-115. Arg-141 contributes to the a 1,2-diacyl-sn-glycero-3-phospho-(1'-sn-glycerol) binding site. A run of 2 helical transmembrane segments spans residues Val-188–Trp-208 and Ile-251–Lys-271. The interval Ala-292–Arg-316 is disordered.

The protein belongs to the Lgt family.

The protein resides in the cell membrane. The enzyme catalyses L-cysteinyl-[prolipoprotein] + a 1,2-diacyl-sn-glycero-3-phospho-(1'-sn-glycerol) = an S-1,2-diacyl-sn-glyceryl-L-cysteinyl-[prolipoprotein] + sn-glycerol 1-phosphate + H(+). It functions in the pathway protein modification; lipoprotein biosynthesis (diacylglyceryl transfer). Catalyzes the transfer of the diacylglyceryl group from phosphatidylglycerol to the sulfhydryl group of the N-terminal cysteine of a prolipoprotein, the first step in the formation of mature lipoproteins. This is Phosphatidylglycerol--prolipoprotein diacylglyceryl transferase from Corynebacterium glutamicum (strain ATCC 13032 / DSM 20300 / JCM 1318 / BCRC 11384 / CCUG 27702 / LMG 3730 / NBRC 12168 / NCIMB 10025 / NRRL B-2784 / 534).